The primary structure comprises 585 residues: Proline--tRNA ligase (585 aa).

The protein belongs to the class-II aminoacyl-tRNA synthetase family. ProS type 1 subfamily. Homodimer.

The protein localises to the cytoplasm. It carries out the reaction tRNA(Pro) + L-proline + ATP = L-prolyl-tRNA(Pro) + AMP + diphosphate. Its function is as follows. Catalyzes the attachment of proline to tRNA(Pro) in a two-step reaction: proline is first activated by ATP to form Pro-AMP and then transferred to the acceptor end of tRNA(Pro). As ProRS can inadvertently accommodate and process non-cognate amino acids such as alanine and cysteine, to avoid such errors it has two additional distinct editing activities against alanine. One activity is designated as 'pretransfer' editing and involves the tRNA(Pro)-independent hydrolysis of activated Ala-AMP. The other activity is designated 'posttransfer' editing and involves deacylation of mischarged Ala-tRNA(Pro). The misacylated Cys-tRNA(Pro) is not edited by ProRS. The sequence is that of Proline--tRNA ligase from Cutibacterium acnes (strain DSM 16379 / KPA171202) (Propionibacterium acnes).